The following is a 498-amino-acid chain: Cytochrome P450 monooxygenase 71 (498 aa).

A helical transmembrane segment spans residues 7-24 (YVFALLGILATLYFVRWS). An N-linked (GlcNAc...) asparagine glycan is attached at Asn425. Cys440 contacts heme.

The protein belongs to the cytochrome P450 family. It depends on heme as a cofactor.

Its subcellular location is the membrane. Its pathway is secondary metabolite biosynthesis. Cytochrome P450 monooxygenase that is able to use dehydroabietic acid and testosterone as substrates for oxidation, suggesting that the natural substrate(s) may be structurally related to steroid compounds. The protein is Cytochrome P450 monooxygenase 71 of Postia placenta (strain ATCC 44394 / Madison 698-R) (Brown rot fungus).